Here is a 427-residue protein sequence, read N- to C-terminus: Glutamate-1-semialdehyde 2,1-aminomutase (427 aa).

Lysine 265 carries the post-translational modification N6-(pyridoxal phosphate)lysine.

It belongs to the class-III pyridoxal-phosphate-dependent aminotransferase family. HemL subfamily. Homodimer. Requires pyridoxal 5'-phosphate as cofactor.

The protein resides in the cytoplasm. The catalysed reaction is (S)-4-amino-5-oxopentanoate = 5-aminolevulinate. It participates in porphyrin-containing compound metabolism; protoporphyrin-IX biosynthesis; 5-aminolevulinate from L-glutamyl-tRNA(Glu): step 2/2. The chain is Glutamate-1-semialdehyde 2,1-aminomutase from Nitratiruptor sp. (strain SB155-2).